The chain runs to 498 residues: Protein YhjJ (498 aa).

Positions 1–24 (MQGTKIRLLAGGLLMMATAGYVQA) are cleaved as a signal peptide.

The protein belongs to the peptidase M16 family.

The protein resides in the periplasm. This Escherichia coli (strain K12) protein is Protein YhjJ (yhjJ).